Consider the following 241-residue polypeptide: Probable transcriptional regulatory protein CV_3123 (241 aa).

This sequence belongs to the TACO1 family.

Its subcellular location is the cytoplasm. This is Probable transcriptional regulatory protein CV_3123 from Chromobacterium violaceum (strain ATCC 12472 / DSM 30191 / JCM 1249 / CCUG 213 / NBRC 12614 / NCIMB 9131 / NCTC 9757 / MK).